The following is a 698-amino-acid chain: Elongation factor G 1 (698 aa).

One can recognise a tr-type G domain in the interval 8–290; sequence ERYRNIGICA…AVIEFLPSPT (283 aa). GTP contacts are provided by residues 17 to 24, 88 to 92, and 142 to 145; these read AHVDAGKT, DTPGH, and NKMD.

It belongs to the TRAFAC class translation factor GTPase superfamily. Classic translation factor GTPase family. EF-G/EF-2 subfamily.

The protein localises to the cytoplasm. Its function is as follows. Catalyzes the GTP-dependent ribosomal translocation step during translation elongation. During this step, the ribosome changes from the pre-translocational (PRE) to the post-translocational (POST) state as the newly formed A-site-bound peptidyl-tRNA and P-site-bound deacylated tRNA move to the P and E sites, respectively. Catalyzes the coordinated movement of the two tRNA molecules, the mRNA and conformational changes in the ribosome. The chain is Elongation factor G 1 from Vibrio cholerae serotype O1 (strain ATCC 39315 / El Tor Inaba N16961).